The following is a 447-amino-acid chain: Guanine nucleotide-binding protein alpha-1 subunit (447 aa).

A lipid anchor (N-myristoyl glycine) is attached at Gly2. Residue Cys3 is the site of S-palmitoyl cysteine attachment. The region spanning 40-447 (NEVKLLLLGA…QQNLKKSGIL (408 aa)) is the G-alpha domain. Residues 43-56 (KLLLLGAGESGKST) form a G1 motif region. Glu51, Ser52, Gly53, Lys54, Ser55, Thr56, Leu269, Thr275, Gly297, Asn363, Lys364, Asp366, and Ala419 together coordinate GTP. Ser55 serves as a coordination point for Mg(2+). Residues 267-275 (DILKGRIKT) form a G2 motif region. Residue Thr275 participates in Mg(2+) binding. The G3 motif stretch occupies residues 290-299 (FKVYDAGGQR). Positions 359–366 (ILFLNKVD) are G4 motif. The tract at residues 417–422 (TCATDT) is G5 motif.

Belongs to the G-alpha family. As to quaternary structure, g proteins are composed of 3 units; alpha, beta and gamma. The alpha chain contains the guanine nucleotide binding site. It depends on Mg(2+) as a cofactor.

Guanine nucleotide-binding proteins (G proteins) are involved as modulators or transducers in various transmembrane signaling systems. This protein is involved in the mating response pathway. The sequence is that of Guanine nucleotide-binding protein alpha-1 subunit (GPA1) from Kluyveromyces lactis (strain ATCC 8585 / CBS 2359 / DSM 70799 / NBRC 1267 / NRRL Y-1140 / WM37) (Yeast).